A 322-amino-acid chain; its full sequence is Interferon regulatory factor 1 (322 aa).

Positions 5–113 (RMRMRPWLEM…SAVRVYRMLP (109 aa)) form a DNA-binding region, IRF tryptophan pentad repeat. N6-acetyllysine is present on lysine 78. Positions 92 to 164 (EEVKDQSRNK…STLPDDHSSY (73 aa)) are disordered. Polar residues predominate over residues 141 to 157 (GESSPDTFSDGLSSSTL). Glycyl lysine isopeptide (Lys-Gly) (interchain with G-Cter in SUMO) cross-links involve residues lysine 276 and lysine 296.

It belongs to the IRF family. As to quaternary structure, monomer. Homodimer. Interacts with EP300. Interacts with MYD88. Interacts with PIAS3. Interacts with SPOP. In terms of processing, phosphorylated by CK2 and this positively regulates its activity. Post-translationally, sumoylation represses the transcriptional activity and displays enhanced resistance to protein degradation. Sumoylated by UBE2I/UBC9 and SUMO1. Inactivates the tumor suppressor activity. Elevated levels in tumor cells. Major site is Lys-276. Sumoylation is enhanced by PIAS3. Desumoylated by SENP1 in tumor cells and appears to compete with ubiquitination on C-terminal sites. Ubiquitinated in a SPOP-depedent manner. Appears to compete with sumoylation on C-terminal sites.

It is found in the nucleus. It localises to the cytoplasm. Activated by MYD88. Functionally, transcriptional regulator which displays a remarkable functional diversity in the regulation of cellular responses. Regulates transcription of IFN and IFN-inducible genes, host response to viral and bacterial infections, regulation of many genes expressed during hematopoiesis, inflammation, immune responses and cell proliferation and differentiation, regulation of the cell cycle and induction of growth arrest and programmed cell death following DNA damage. Stimulates both innate and acquired immune responses through the activation of specific target genes and can act as a transcriptional activator and repressor regulating target genes by binding to an interferon-stimulated response element (ISRE) in their promoters. Has an essentail role in IFNG-dependent immunity to mycobacteria. Binds to a consensus sequence in gene promoters. Its target genes for transcriptional activation activity include: genes involved in anti-viral response, such as IFN-alpha/beta, RIGI, TNFSF10/TRAIL, ZBP1, OAS1/2, PIAS1/GBP, EIF2AK2/PKR and RSAD2/viperin; antibacterial response, such as GBP2, GBP5 and NOS2/INOS; anti-proliferative response, such as p53/TP53, LOX and CDKN1A; apoptosis, such as BBC3/PUMA, CASP1, CASP7 and CASP8; immune response, such as IL7, IL12A/B and IL15, PTGS2/COX2 and CYBB; DNA damage responses and DNA repair, such as POLQ/POLH; MHC class I expression, such as TAP1, PSMB9/LMP2, PSME1/PA28A, PSME2/PA28B and B2M and MHC class II expression, such as CIITA; metabolic enzymes, such as ACOD1/IRG1. Represses genes involved in anti-proliferative response, such as BIRC5/survivin, CCNB1, CCNE1, CDK1, CDK2 and CDK4 and in immune response, such as FOXP3, IL4, ANXA2 and TLR4. Stimulates p53/TP53-dependent transcription through enhanced recruitment of EP300 leading to increased acetylation of p53/TP53. Plays an important role in immune response directly affecting NK maturation and activity, macrophage production of IL12, Th1 development and maturation of CD8+ T-cells. Also implicated in the differentiation and maturation of dendritic cells and in the suppression of regulatory T (Treg) cells development. Acts as a tumor suppressor and plays a role not only in antagonism of tumor cell growth but also in stimulating an immune response against tumor cells. The protein is Interferon regulatory factor 1 (IRF1) of Sus scrofa (Pig).